Reading from the N-terminus, the 151-residue chain is D-aminoacyl-tRNA deacylase (151 aa).

Residues Gly-137–Pro-138 carry the Gly-cisPro motif, important for rejection of L-amino acids motif.

Belongs to the DTD family. As to quaternary structure, homodimer.

Its subcellular location is the cytoplasm. It catalyses the reaction glycyl-tRNA(Ala) + H2O = tRNA(Ala) + glycine + H(+). It carries out the reaction a D-aminoacyl-tRNA + H2O = a tRNA + a D-alpha-amino acid + H(+). In terms of biological role, an aminoacyl-tRNA editing enzyme that deacylates mischarged D-aminoacyl-tRNAs. Also deacylates mischarged glycyl-tRNA(Ala), protecting cells against glycine mischarging by AlaRS. Acts via tRNA-based rather than protein-based catalysis; rejects L-amino acids rather than detecting D-amino acids in the active site. By recycling D-aminoacyl-tRNA to D-amino acids and free tRNA molecules, this enzyme counteracts the toxicity associated with the formation of D-aminoacyl-tRNA entities in vivo and helps enforce protein L-homochirality. The sequence is that of D-aminoacyl-tRNA deacylase from Solibacter usitatus (strain Ellin6076).